The sequence spans 447 residues: Peptide chain release factor 1, mitochondrial (447 aa).

The N-terminal 63 residues, 1–63 (MNRRHLFAWL…LLNKNCSRRY (63 aa)), are a transit peptide targeting the mitochondrion. The GGQ domain stretch occupies residues 299-363 (PKDLRIDTFR…LRARLYQQII (65 aa)). The GGQ motif lies at 313 to 315 (GGQ). Gln315 is modified (N5-methylglutamine).

This sequence belongs to the prokaryotic/mitochondrial release factor family. Methylation of glutamine in the GGQ triplet by HEMK1 is conserved from bacteria to mammals.

The protein resides in the mitochondrion. Functionally, mitochondrial peptide chain release factor that directs the termination of translation in response to the peptide chain non-canonical stop codons AGG and AGA. Non-canonical termination codons AGG and AGA are found at the end of MT-CO1/COX1 and MT-ND6/ND6 open reading frames, respectively. Recognizes non-canonical stop codons via a network of interactions between the codon, MTRF1 and the ribosomal RNA (rRNA): in contrast to other translation release factors, which identify the codon in the A-site via direct interactions of amino acid side chains with the bases, MTRF1 repositions the first 2 bases of the stop codon to use an intricate network of interactions that includes residues of the release factor, the rRNA of the small ribosomal subunit, as well as neighboring bases of the mRNA. The protein is Peptide chain release factor 1, mitochondrial (MTRF1) of Bos taurus (Bovine).